Here is a 310-residue protein sequence, read N- to C-terminus: Endo-1,4-beta-xylanase B (310 aa).

The signal sequence occupies residues 1–19; that stretch reads MISLSSVAIALTTVVGALA. The GH11 domain maps to 33-223; sequence AITSSQTGTN…SSGSASMTVS (191 aa). Glu119 serves as the catalytic Nucleophile. Glu210 functions as the Proton donor in the catalytic mechanism. Residues 218–227 are compositionally biased toward low complexity; the sequence is ASMTVSAGSS. Positions 218–274 are disordered; that stretch reads ASMTVSAGSSSSGGSGSGSGSGSGSGSGSGSQTTTAGSSTGTGTGSGSGSGSGGSGG. The span at 228–246 shows a compositional bias: gly residues; the sequence is SSGGSGSGSGSGSGSGSGS. A compositionally biased stretch (low complexity) spans 247–256; that stretch reads GSQTTTAGSS. The segment covering 257–274 has biased composition (gly residues); that stretch reads TGTGTGSGSGSGSGGSGG. Positions 275–310 constitute a CBM1 domain; sequence NCAAQWGQCGGQGWNGPTCCSSGTCKASNQWYSQCL.

Belongs to the glycosyl hydrolase 11 (cellulase G) family.

Its subcellular location is the secreted. It catalyses the reaction Endohydrolysis of (1-&gt;4)-beta-D-xylosidic linkages in xylans.. The protein operates within glycan degradation; xylan degradation. In terms of biological role, endo-1,4-beta-xylanase involved in the hydrolysis of xylan, a major structural heterogeneous polysaccharide found in plant biomass representing the second most abundant polysaccharide in the biosphere, after cellulose. Hydrolyzes birchwood xylan, beechwood xylan, and oat spelt xylan to produce short-chain xylooligosaccharides, xylopentaose, xylotriose, and xylobiose as the main products. This chain is Endo-1,4-beta-xylanase B (xynB), found in Penicillium oxalicum.